The following is a 2004-amino-acid chain: Immunoglobulin A1 protease (2004 aa).

An N-terminal signal peptide occupies residues 1 to 42 (MEKYFGEKQERFSFRKLSVGLVSATISSLFFMSVLASSSVDA). The propeptide occupies 43 to 99 (QETAGVHYKYVADSELSSEEKKQLVYDIPTYVENDDETYYLVYKLNSQNQLAELPNT). An LPXTG sorting signal motif is present at residues 96 to 100 (LPNTG). Pentaglycyl murein peptidoglycan amidated threonine is present on T99. The next 2 membrane-spanning stretches (helical) occupy residues 106–125 (QALV…FAVS) and 132–154 (KTVL…VHAL). Over 155 to 2004 (ENHLLLNYNT…FRSSIFENKK (1850 aa)) the chain is Extracellular. 4 disordered regions span residues 194-213 (TTSE…PTKQ), 235-305 (QEQT…NPQD), 373-394 (EIVS…TKKT), and 422-720 (PELP…PEKT). Composition is skewed to polar residues over residues 197–213 (ESEV…PTKQ) and 235–246 (QEQTPVSSTKPT). Basic and acidic residues predominate over residues 276–296 (LAEHKNLETKKEEKISPKEKT). The region spanning 314–393 (KPELLYREET…PRIVEKGTKK (80 aa)) is the G5 domain. 3 repeat units span residues 419–435 (AIQP…KGEP), 436–452 (EVQP…KGET), and 453–469 (EVQP…KGEP). Positions 419–469 (AIQPELPEAVVSDKGEPEVQPTLPEAVVTDKGETEVQPESPDTVVSDKGEP) are 3 X 17 AA approximate tandem repeats. The span at 485 to 511 (VKPETPVEKTKEQGPEKTEEVPVKPTE) shows a compositional bias: basic and acidic residues. 2 stretches are compositionally biased toward polar residues: residues 516 to 529 (NPNE…SIQE) and 538 to 572 (EEST…SVGE). Basic and acidic residues predominate over residues 574 to 591 (NKPEHNDSKNENSEKTVE). Polar residues-rich tracts occupy residues 618–639 (EETQ…SNKP) and 648–681 (ESNQ…PSNG). The span at 682–699 (NSTEDVSTESNTSNSNGN) shows a compositional bias: low complexity. Positions 700–720 (EEIKQENELDPDKKVEEPEKT) are enriched in basic and acidic residues. H1645 contacts Zn(2+). E1646 is an active-site residue. H1649 and E1669 together coordinate Zn(2+).

It belongs to the peptidase M26 family. Requires Zn(2+) as cofactor. Post-translationally, the Gram-positive cell-wall anchor motif LPXTG is located in the N-terminal part, in contrast to such motifs in other known streptococcal and staphylococcal proteins. The protease could be cleaved by the sortase and anchored in the membrane via the two potential N-terminal transmembrane domains, whereas the propeptide located prior to the LPXTG motif would remain attached to the cell wall peptidoglycan by an amide bond.

It localises to the secreted. Its subcellular location is the cell wall. The protein localises to the membrane. It catalyses the reaction Cleavage of Pro-|-Thr bond in the hinge region of the heavy chain of human IgA.. In terms of biological role, zinc metalloproteinase which cleaves human immunoglobulin A1 (IgA1) in the hinge region, rendering it less efficient in coating the surface of colonizing or invading pneumococci. Strongly contributes to virulence in mice. May be responsible for pneumococcal infection and is potentially involved in distinct stages of pneumococcal disease. This is Immunoglobulin A1 protease (iga) from Streptococcus pneumoniae serotype 4 (strain ATCC BAA-334 / TIGR4).